Here is a 173-residue protein sequence, read N- to C-terminus: Glycine cleavage system H protein, mitochondrial (173 aa).

The transit peptide at 1–48 directs the protein to the mitochondrion; it reads MALRVVRSVRALLCTLRAVPSPAAPCPPRPWQLGVGAVRTLRTGPALL. Positions 66 to 148 constitute a Lipoyl-binding domain; sequence IGTVGISNFA…YEDGWLIKMT (83 aa). At lysine 107 the chain carries N6-lipoyllysine.

Belongs to the GcvH family. As to quaternary structure, interacts with GLDC. The glycine cleavage system is composed of four proteins: P (GLDC), T (GCST), L (DLD) and H (GCSH). (R)-lipoate serves as cofactor.

The protein localises to the mitochondrion. The glycine cleavage system catalyzes the degradation of glycine. The H protein (GCSH) shuttles the methylamine group of glycine from the P protein (GLDC) to the T protein (GCST). Has a pivotal role in the lipoylation of enzymes involved in cellular energetics such as the mitochondrial dihydrolipoyllysine-residue acetyltransferase component of pyruvate dehydrogenase complex (DLAT), and the mitochondrial dihydrolipoyllysine-residue succinyltransferase component of 2-oxoglutarate dehydrogenase complex (DLST). The protein is Glycine cleavage system H protein, mitochondrial of Homo sapiens (Human).